The following is a 157-amino-acid chain: Protein Smg homolog (157 aa).

It belongs to the Smg family.

The protein is Protein Smg homolog of Aeromonas hydrophila subsp. hydrophila (strain ATCC 7966 / DSM 30187 / BCRC 13018 / CCUG 14551 / JCM 1027 / KCTC 2358 / NCIMB 9240 / NCTC 8049).